Consider the following 159-residue polypeptide: Ribosome maturation factor RimP (159 aa).

This sequence belongs to the RimP family.

The protein localises to the cytoplasm. Required for maturation of 30S ribosomal subunits. This is Ribosome maturation factor RimP from Trichlorobacter lovleyi (strain ATCC BAA-1151 / DSM 17278 / SZ) (Geobacter lovleyi).